The following is a 1537-amino-acid chain: Histone-lysine N-methyltransferase, H3 lysine-79 specific (1537 aa).

One can recognise a DOT1 domain in the interval 16-330; it reads EPAVYPWPLP…ILENYFSSLK (315 aa). S-adenosyl-L-methionine is bound by residues 136–139, 159–168, E186, and 222–223; these read YGET, FVDLGSGVGQ, and DF. Residue S297 is modified to Phosphoserine. Basic and acidic residues predominate over residues 334 to 350; that stretch reads LREEQEAARRRQQRESK. The tract at residues 334–467 is disordered; that stretch reads LREEQEAARR…SPFYQLPPSV (134 aa). S374 bears the Phosphoserine mark. Positions 391–416 are required for interaction with nucleosomes and DNA; that stretch reads PSKARKKKLNKKGRKMAGRKRGRPKK. Residues 393 to 416 are compositionally biased toward basic residues; that stretch reads KARKKKLNKKGRKMAGRKRGRPKK. Residues 439–450 show a composition bias toward polar residues; sequence QTVSQTAASSPQ. Residues S448 and S471 each carry the phosphoserine modification. At T480 the chain carries Phosphothreonine. S775 and S786 each carry phosphoserine. 4 disordered regions span residues 785 to 853, 893 to 912, 957 to 1128, and 1145 to 1243; these read LSQD…LRER, RAER…DPSS, TPGA…LNLN, and SPET…KWKS. Residues 800 to 809 show a composition bias toward basic and acidic residues; that stretch reads LHSRAEHTKE. S826 is subject to Phosphoserine. S834 carries the phosphoserine; by MAPK11 modification. The span at 844-853 shows a compositional bias: basic and acidic residues; the sequence is KSSEKGLRER. Polar residues-rich tracts occupy residues 899-912, 966-986, and 994-1010; these read STPS…DPSS, DESS…STPQ, and PRNS…SSSP. Position 900 is a phosphothreonine; by MAPK11 (T900). S902 is subject to Phosphoserine; by MAPK11. T984 bears the Phosphothreonine; by MAPK11 mark. S997 carries the post-translational modification Phosphoserine. Phosphoserine; by MAPK11 is present on residues S1001 and S1009. S1035 carries the post-translational modification Phosphoserine. Residues 1048-1068 show a composition bias toward polar residues; the sequence is TITTGAGSAKQSPSSKHSPLT. S1093 is subject to Phosphoserine. The residue at position 1104 (S1104) is a Phosphoserine; by MAPK11. Residues 1118 to 1128 are compositionally biased toward polar residues; the sequence is TQPSGSPLNLN. Residues 1158-1171 show a composition bias toward basic and acidic residues; that stretch reads QDHDQPPVLKKERP. Over residues 1172–1184 the composition is skewed to polar residues; the sequence is LSQTNGAHYSPLT. Residues 1185 to 1195 show a composition bias toward acidic residues; sequence SDEEPGSEDEP. S1213 and S1246 each carry phosphoserine. The segment at 1334–1410 is disordered; sequence GASLPHKGPE…DKTPLLSGKA (77 aa).

It belongs to the class I-like SAM-binding methyltransferase superfamily. DOT1 family. Interacts with MLLT10.

It is found in the nucleus. The catalysed reaction is L-lysyl(79)-[histone H3] + 3 S-adenosyl-L-methionine = N(6),N(6),N(6)-trimethyl-L-lysyl(79)-[histone H3] + 3 S-adenosyl-L-homocysteine + 3 H(+). In terms of biological role, histone methyltransferase. Methylates 'Lys-79' of histone H3. Nucleosomes are preferred as substrate compared to free histones. Binds to DNA. The sequence is that of Histone-lysine N-methyltransferase, H3 lysine-79 specific from Homo sapiens (Human).